The chain runs to 620 residues: Glutathione-regulated potassium-efflux system protein KefC (620 aa).

Transmembrane regions (helical) follow at residues 4–24 (HTLM…PIAV), 26–46 (LGLG…PWGL), 54–74 (SILH…GLEL), 90–110 (GALQ…FLGL), 114–134 (VAEL…MQAM), 149–169 (FAVL…IPLL), 178–198 (LGAF…VVLL), 218–238 (VFSA…EEVG), 270–290 (GLLL…GTLV), 294–314 (LRIL…LWLI), 327–347 (WFAV…GAAQ), and 359–379 (ALTL…VLLT). The RCK N-terminal domain maps to 399–518 (QPRVIVAGFG…AGVAMPERET (120 aa)). The tract at residues 599–620 (QGTAEGKHTGDIADEPQVKPST) is disordered.

This sequence belongs to the monovalent cation:proton antiporter 2 (CPA2) transporter (TC 2.A.37) family. KefC subfamily. Homodimer. Interacts with the regulatory subunit KefF.

The protein resides in the cell inner membrane. Functionally, pore-forming subunit of a potassium efflux system that confers protection against electrophiles. Catalyzes K(+)/H(+) antiport. The chain is Glutathione-regulated potassium-efflux system protein KefC from Salmonella arizonae (strain ATCC BAA-731 / CDC346-86 / RSK2980).